The following is a 440-amino-acid chain: Chromosomal replication initiator protein DnaA (440 aa).

A domain I, interacts with DnaA modulators region spans residues 1 to 72 (MTELDSLWEA…KEFAQRELGR (72 aa)). Residues 72-103 (RNIEPHYVLEGEFTYTNKKTEDDPTPSFEMDT) are domain II. A domain III, AAA+ region region spans residues 104–320 (PLNPHYNFGT…GALTKVQAFA (217 aa)). ATP is bound by residues Gly-148, Gly-150, Lys-151, and Thr-152. The segment at 321 to 440 (NLSGERITPS…ITKLKAKLRS (120 aa)) is domain IV, binds dsDNA.

The protein belongs to the DnaA family. As to quaternary structure, oligomerizes as a right-handed, spiral filament on DNA at oriC.

The protein localises to the cytoplasm. Its function is as follows. Plays an essential role in the initiation and regulation of chromosomal replication. ATP-DnaA binds to the origin of replication (oriC) to initiate formation of the DNA replication initiation complex once per cell cycle. Binds the DnaA box (a 9 base pair repeat at the origin) and separates the double-stranded (ds)DNA. Forms a right-handed helical filament on oriC DNA; dsDNA binds to the exterior of the filament while single-stranded (ss)DNA is stabiized in the filament's interior. The ATP-DnaA-oriC complex binds and stabilizes one strand of the AT-rich DNA unwinding element (DUE), permitting loading of DNA polymerase. After initiation quickly degrades to an ADP-DnaA complex that is not apt for DNA replication. Binds acidic phospholipids. This Limosilactobacillus reuteri (strain DSM 20016) (Lactobacillus reuteri) protein is Chromosomal replication initiator protein DnaA.